Here is a 483-residue protein sequence, read N- to C-terminus: ATP synthase subunit beta (483 aa).

162 to 169 (GGAGVGKT) contacts ATP.

It belongs to the ATPase alpha/beta chains family. F-type ATPases have 2 components, CF(1) - the catalytic core - and CF(0) - the membrane proton channel. CF(1) has five subunits: alpha(3), beta(3), gamma(1), delta(1), epsilon(1). CF(0) has four main subunits: a(1), b(1), b'(1) and c(9-12).

It localises to the cellular thylakoid membrane. The enzyme catalyses ATP + H2O + 4 H(+)(in) = ADP + phosphate + 5 H(+)(out). In terms of biological role, produces ATP from ADP in the presence of a proton gradient across the membrane. The catalytic sites are hosted primarily by the beta subunits. This is ATP synthase subunit beta from Synechocystis sp. (strain ATCC 27184 / PCC 6803 / Kazusa).